The primary structure comprises 207 residues: 2,3-bisphosphoglycerate-dependent phosphoglycerate mutase (207 aa).

Residues arginine 10 to asparagine 17, threonine 23 to glycine 24, arginine 62, glutamate 89 to tyrosine 92, lysine 100, arginine 116 to arginine 117, and glycine 160 to asparagine 161 each bind substrate. Catalysis depends on histidine 11, which acts as the Tele-phosphohistidine intermediate. Glutamate 89 (proton donor/acceptor) is an active-site residue.

Belongs to the phosphoglycerate mutase family. BPG-dependent PGAM subfamily. In terms of assembly, homodimer.

The catalysed reaction is (2R)-2-phosphoglycerate = (2R)-3-phosphoglycerate. Its pathway is carbohydrate degradation; glycolysis; pyruvate from D-glyceraldehyde 3-phosphate: step 3/5. Its function is as follows. Catalyzes the interconversion of 2-phosphoglycerate and 3-phosphoglycerate. In Rhodopseudomonas palustris (strain BisB18), this protein is 2,3-bisphosphoglycerate-dependent phosphoglycerate mutase.